The following is a 30-amino-acid chain: Kalata-B16 (30 aa).

Positions 1–30 form a cross-link, cyclopeptide (Gly-Asp); that stretch reads GIPCAESCVYIPCTITALLGCKCQDKVCYD. 3 cysteine pairs are disulfide-bonded: cysteine 4/cysteine 21, cysteine 8/cysteine 23, and cysteine 13/cysteine 28.

Post-translationally, this is a cyclic peptide.

Functionally, probably participates in a plant defense mechanism. The protein is Kalata-B16 of Oldenlandia affinis.